The primary structure comprises 95 residues: Protein NCBP2AS2 homolog (95 aa).

In Ixodes scapularis (Black-legged tick), this protein is Protein NCBP2AS2 homolog.